The primary structure comprises 185 residues: Dual-action ribosomal maturation protein DarP (185 aa).

Residues 1 to 22 form a disordered region; the sequence is MWKNGAMRGCNKETGEFLGPSR.

This sequence belongs to the DarP family.

It is found in the cytoplasm. Its function is as follows. Member of a network of 50S ribosomal subunit biogenesis factors which assembles along the 30S-50S interface, preventing incorrect 23S rRNA structures from forming. Promotes peptidyl transferase center (PTC) maturation. The protein is Dual-action ribosomal maturation protein DarP of Xylella fastidiosa (strain 9a5c).